The chain runs to 486 residues: dTDP-4-dehydro-6-deoxy-alpha-D-glucopyranose 2,3-dehydratase (486 aa).

DTDP-4-dehydro-6-deoxy-alpha-D-glucose-binding positions include W66, 149–153, S187, W304, R367, 383–385, 388–389, and 421–424; these read TRSNY, QCS, NY, and EGGR.

This sequence belongs to the hexose 2,3-dehydratase family. Homodimer.

It carries out the reaction dTDP-4-dehydro-6-deoxy-alpha-D-glucose = dTDP-3,4-didehydro-2,6-dideoxy-alpha-D-glucose + H2O. In terms of biological role, involved in the biosynthesis of forosamine ((4-dimethylamino)-2,3,4,6-tetradeoxy-alpha-D-threo-hexopyranose), a highly deoxygenated sugar component of several bioactive natural products such as the insecticidal spinosyns A and D. Catalyzes the removal of the hydroxyl group at position C-2 of the hexose ring of dTDP-4-dehydro-6-deoxy-alpha-D-glucopyranose, and the oxidation of the hydroxyl group at position C-3 to form a carbonyl functionality. The product of the reaction, dTDP-2,6-dideoxy-D-glycero-hex-2-enos-4-ulose, is a highly unstable diketosugar, which spontaneously forms dTDP-3,4-didehydro-2,6-dideoxy-alpha-D-glucose. This chain is dTDP-4-dehydro-6-deoxy-alpha-D-glucopyranose 2,3-dehydratase, found in Saccharopolyspora spinosa.